A 343-amino-acid chain; its full sequence is Anthranilate phosphoribosyltransferase (343 aa).

Residues Gly84, 87-88 (GD), Thr92, 94-97 (NIST), 112-120 (KHGNRGVSS), and Ser124 each bind 5-phospho-alpha-D-ribose 1-diphosphate. Gly84 is an anthranilate binding site. Residue Ser96 participates in Mg(2+) binding. Residue Asn115 coordinates anthranilate. Residue Arg170 participates in anthranilate binding. Residues Asp229 and Glu230 each contribute to the Mg(2+) site.

The protein belongs to the anthranilate phosphoribosyltransferase family. In terms of assembly, homodimer. Mg(2+) serves as cofactor.

It catalyses the reaction N-(5-phospho-beta-D-ribosyl)anthranilate + diphosphate = 5-phospho-alpha-D-ribose 1-diphosphate + anthranilate. It participates in amino-acid biosynthesis; L-tryptophan biosynthesis; L-tryptophan from chorismate: step 2/5. Functionally, catalyzes the transfer of the phosphoribosyl group of 5-phosphorylribose-1-pyrophosphate (PRPP) to anthranilate to yield N-(5'-phosphoribosyl)-anthranilate (PRA). The protein is Anthranilate phosphoribosyltransferase of Burkholderia ambifaria (strain MC40-6).